A 274-amino-acid chain; its full sequence is MPFRSNNPLTRDEFLSRFFPQFHPVTTFNRGLSGGSFLIEHQGQRFVVRQPHDPDAPQSAFLRQYRALSQLPACIAPKPHLYLRDWMVVDYLPGEVKTYLPDTNELAGLLYYLHQQPRFGWRITLLPLLELYWQQSDPARRTVGWLRMLKRLRKAREPRLLRLSPLHMDVHAGNLVHSASGLKLIDWEYAGDGDIALELAAVWVENTDQHRQLVNDYATRAKIYPAQLWRQVRRWFPWLLMLKAGWFEYRWRQTGDQQFIRLADDTWRQLLIKQ.

The protein belongs to the thiamine kinase family.

The catalysed reaction is thiamine + ATP = thiamine phosphate + ADP + H(+). Its pathway is cofactor biosynthesis; thiamine diphosphate biosynthesis; thiamine phosphate from thiamine: step 1/1. In terms of biological role, catalyzes the ATP-dependent phosphorylation of thiamine to thiamine phosphate. Is involved in thiamine salvage. The sequence is that of Thiamine kinase from Escherichia coli O6:K15:H31 (strain 536 / UPEC).